A 199-amino-acid chain; its full sequence is Thymidylate kinase (199 aa).

An ATP-binding site is contributed by 7–14 (GTEGVGKT).

It belongs to the thymidylate kinase family.

It carries out the reaction dTMP + ATP = dTDP + ADP. Its function is as follows. Phosphorylation of dTMP to form dTDP in both de novo and salvage pathways of dTTP synthesis. The chain is Thymidylate kinase from Acinetobacter baumannii (strain ACICU).